The primary structure comprises 235 residues: Large ribosomal subunit protein uL1 (235 aa).

The interval 1 to 22 is disordered; the sequence is MSKNSKAYRAAAEKVDRSNPYT.

The protein belongs to the universal ribosomal protein uL1 family. In terms of assembly, part of the 50S ribosomal subunit.

Functionally, binds directly to 23S rRNA. The L1 stalk is quite mobile in the ribosome, and is involved in E site tRNA release. In terms of biological role, protein L1 is also a translational repressor protein, it controls the translation of the L11 operon by binding to its mRNA. The polypeptide is Large ribosomal subunit protein uL1 (Mycobacterium ulcerans (strain Agy99)).